Here is a 359-residue protein sequence, read N- to C-terminus: UDP-N-acetylglucosamine--N-acetylmuramyl-(pentapeptide) pyrophosphoryl-undecaprenol N-acetylglucosamine transferase (359 aa).

UDP-N-acetyl-alpha-D-glucosamine-binding positions include 15–17 (TGG), asparagine 127, arginine 166, serine 191, isoleucine 245, 264–269 (ALTVSE), and glutamine 290.

It belongs to the glycosyltransferase 28 family. MurG subfamily.

It is found in the cell inner membrane. The enzyme catalyses di-trans,octa-cis-undecaprenyl diphospho-N-acetyl-alpha-D-muramoyl-L-alanyl-D-glutamyl-meso-2,6-diaminopimeloyl-D-alanyl-D-alanine + UDP-N-acetyl-alpha-D-glucosamine = di-trans,octa-cis-undecaprenyl diphospho-[N-acetyl-alpha-D-glucosaminyl-(1-&gt;4)]-N-acetyl-alpha-D-muramoyl-L-alanyl-D-glutamyl-meso-2,6-diaminopimeloyl-D-alanyl-D-alanine + UDP + H(+). It participates in cell wall biogenesis; peptidoglycan biosynthesis. Cell wall formation. Catalyzes the transfer of a GlcNAc subunit on undecaprenyl-pyrophosphoryl-MurNAc-pentapeptide (lipid intermediate I) to form undecaprenyl-pyrophosphoryl-MurNAc-(pentapeptide)GlcNAc (lipid intermediate II). This Pseudomonas putida (strain GB-1) protein is UDP-N-acetylglucosamine--N-acetylmuramyl-(pentapeptide) pyrophosphoryl-undecaprenol N-acetylglucosamine transferase.